A 160-amino-acid chain; its full sequence is Keratin-associated protein 13-4 (160 aa).

4 consecutive repeat copies span residues 41-50 (CQLRSSLYRD), 51-60 (CQKTCWEPAS), 61-70 (CQKSCYRPRT), and 77-86 (CQTTCSGSLG). The interval 41-86 (CQLRSSLYRDCQKTCWEPASCQKSCYRPRTSILCCPCQTTCSGSLG) is 4 X 10 AA approximate repeats.

This sequence belongs to the PMG family. As to quaternary structure, interacts with hair keratins.

Functionally, in the hair cortex, hair keratin intermediate filaments are embedded in an interfilamentous matrix, consisting of hair keratin-associated proteins (KRTAP), which are essential for the formation of a rigid and resistant hair shaft through their extensive disulfide bond cross-linking with abundant cysteine residues of hair keratins. The matrix proteins include the high-sulfur and high-glycine-tyrosine keratins. This is Keratin-associated protein 13-4 (KRTAP13-4) from Homo sapiens (Human).